A 238-amino-acid chain; its full sequence is TKPLDRELIARFHLRAHAVDINGNRVENPIDIVINVIDMNDNRPEFLHQVWNGSVPEGSKPGTYVMTVTAIDADDPNALNGMLRYRILSQAPSTPSPNMFTINNETGDIITVAAGLDREKVQQYTLIIQATDMEGNPTYGLSNTATAVITVTDVNDNPPEFTAMTFYGEVPENRVEVIVANLTVTDKDQPHTPAWNAVYRISGGDPTGRFAIHTDPNSNDGLVTVVKPIDFETNRMFV.

Cadherin domains follow at residues 1 to 46 (TKPL…RPEF), 47 to 161 (LHQV…PPEF), and 162 to 238 (TAMT…RMFV). The Extracellular portion of the chain corresponds to 1–238 (TKPLDRELIA…IDFETNRMFV (238 aa)). Ca(2+)-binding residues include aspartate 5, glutamate 7, aspartate 38, methionine 39, asparagine 40, aspartate 41, and asparagine 42. An N-linked (GlcNAc...) asparagine glycan is attached at asparagine 52. 3 residues coordinate Ca(2+): aspartate 72, aspartate 74, and asparagine 80. An N-linked (GlcNAc...) asparagine glycan is attached at asparagine 104. Residue aspartate 132 coordinates Ca(2+). The N-linked (GlcNAc...) asparagine glycan is linked to asparagine 181.

Homodimer (via extracellular region). Can also form heterodimers with other cadherins (via extracellular region). Dimerization occurs in trans, i.e. with a cadherin chain from another cell. Interacts with CDCP1. Interacts with PCDH8; this complex may also include TAOK2. The interaction with PCDH8 may lead to internalization through TAOK2/p38 MAPK pathway. Identified in a complex containing FGFR4, NCAM1, CDH2, PLCG1, FRS2, SRC, SHC1, GAP43 and CTTN. May interact with OBSCN (via protein kinase domain 2). In terms of processing, cleaved by MMP24. Ectodomain cleavage leads to the generation of a soluble 90 kDa N-terminal soluble fragment and a 45 kDa membrane-bound C-terminal fragment 1 (CTF1), which is further cleaved by gamma-secretase into a 35 kDa. Cleavage in neural stem cells by MMP24 affects CDH2-mediated anchorage of neural stem cells to ependymocytes in the adult subependymal zone, leading to modulate neural stem cell quiescence. Post-translationally, may be phosphorylated by OBSCN.

The protein localises to the cell membrane. It localises to the sarcolemma. Its subcellular location is the cell junction. The protein resides in the cell surface. It is found in the desmosome. The protein localises to the adherens junction. Its function is as follows. Calcium-dependent cell adhesion protein; preferentially mediates homotypic cell-cell adhesion by dimerization with a CDH2 chain from another cell. Cadherins may thus contribute to the sorting of heterogeneous cell types. Acts as a regulator of neural stem cells quiescence by mediating anchorage of neural stem cells to ependymocytes in the adult subependymal zone: upon cleavage by MMP24, CDH2-mediated anchorage is affected, leading to modulate neural stem cell quiescence. Plays a role in cell-to-cell junction formation between pancreatic beta cells and neural crest stem (NCS) cells, promoting the formation of processes by NCS cells. Required for proper neurite branching. Required for pre- and postsynaptic organization. CDH2 may be involved in neuronal recognition mechanism. In hippocampal neurons, may regulate dendritic spine density. The sequence is that of Cadherin-2 (CDH2) from Cricetulus griseus (Chinese hamster).